The chain runs to 142 residues: Large ribosomal subunit protein uL11 (142 aa).

This sequence belongs to the universal ribosomal protein uL11 family. In terms of assembly, part of the ribosomal stalk of the 50S ribosomal subunit. Interacts with L10 and the large rRNA to form the base of the stalk. L10 forms an elongated spine to which L12 dimers bind in a sequential fashion forming a multimeric L10(L12)X complex. Post-translationally, one or more lysine residues are methylated.

Forms part of the ribosomal stalk which helps the ribosome interact with GTP-bound translation factors. The polypeptide is Large ribosomal subunit protein uL11 (Yersinia pestis bv. Antiqua (strain Angola)).